Consider the following 60-residue polypeptide: Large ribosomal subunit protein uL30 (60 aa).

This sequence belongs to the universal ribosomal protein uL30 family. In terms of assembly, part of the 50S ribosomal subunit.

The sequence is that of Large ribosomal subunit protein uL30 from Streptococcus uberis (strain ATCC BAA-854 / 0140J).